Reading from the N-terminus, the 58-residue chain is MIKHFHFNKLSSGKKNNVPSPAKGVIQIKKSASQLTKGGAGHVPEYFVGIGTPISFYG.

Residues Met-1–Lys-37 constitute a propeptide that is removed on maturation. A cross-link (isoglutamyl glycine isopeptide (Gly-Glu)) is located at residues Gly-38–Glu-45.

It localises to the secreted. Its function is as follows. Peptide antibiotic that functions through inhibition of the bacterial DNA-dependent RNA polymerase (RNAP). Inhibits transcription by binding deep within RNAP secondary channel, where it sterically blocks the folding of the trigger loop, which is essential for efficient catalysis. In addition, it also seems to restrict access of nucleotide substrates to the catalytic center, and shows a partially competitive mode of inhibition with them. Exhibits potent bacteriocidal activity against a range of Enterobacteriaceae, including several pathogenic E.coli, Salmonella and Shigella strains. Also acts on the cytoplasmic membrane of Salmonella newport, producing alteration of membrane permeability and disruption of the subsequent gradient dissipation, which inhibits several processes essential for cell viability, such as oxygen consumption. Induces bacterial filamentation in susceptible cells in a non-SOS-dependent way, but this phenotype may result from impaired transcription of genes coding for cell division proteins. The polypeptide is Microcin J25 (mcjA) (Escherichia coli).